The sequence spans 428 residues: Adenylosuccinate synthetase (428 aa).

Residues 12–18 (GDEGKGK) and 40–42 (GHT) contribute to the GTP site. Residue aspartate 13 is the Proton acceptor of the active site. Residues aspartate 13 and glycine 40 each coordinate Mg(2+). Residues 13-16 (DEGK), 38-41 (NAGH), threonine 129, arginine 143, glutamine 224, threonine 239, and arginine 303 each bind IMP. Histidine 41 serves as the catalytic Proton donor. Substrate is bound at residue 299-305 (VTTGRSR). Residues arginine 305, 331 to 333 (KLD), and 413 to 415 (GVG) contribute to the GTP site.

The protein belongs to the adenylosuccinate synthetase family. Homodimer. Mg(2+) serves as cofactor.

Its subcellular location is the cytoplasm. It carries out the reaction IMP + L-aspartate + GTP = N(6)-(1,2-dicarboxyethyl)-AMP + GDP + phosphate + 2 H(+). It functions in the pathway purine metabolism; AMP biosynthesis via de novo pathway; AMP from IMP: step 1/2. Plays an important role in the de novo pathway of purine nucleotide biosynthesis. Catalyzes the first committed step in the biosynthesis of AMP from IMP. The protein is Adenylosuccinate synthetase of Saccharopolyspora erythraea (strain ATCC 11635 / DSM 40517 / JCM 4748 / NBRC 13426 / NCIMB 8594 / NRRL 2338).